The sequence spans 333 residues: NADH-ubiquinone oxidoreductase chain 2 (333 aa).

Transmembrane regions (helical) follow at residues 10–30 (WFIY…NIFI), 57–77 (LIYY…IIVY), 91–111 (FMVQ…FWMI), 121–141 (QIFL…VSMT), 143–163 (INSW…FYAN), 170–190 (KLLA…LELN), 192–212 (NMFI…ISFL), 242–262 (MYPI…MVSV), 267–287 (WILF…IIIL), and 313–333 (SYFA…LNFL).

It belongs to the complex I subunit 2 family.

The protein resides in the mitochondrion inner membrane. It carries out the reaction a ubiquinone + NADH + 5 H(+)(in) = a ubiquinol + NAD(+) + 4 H(+)(out). Functionally, core subunit of the mitochondrial membrane respiratory chain NADH dehydrogenase (Complex I) that is believed to belong to the minimal assembly required for catalysis. Complex I functions in the transfer of electrons from NADH to the respiratory chain. The immediate electron acceptor for the enzyme is believed to be ubiquinone. The sequence is that of NADH-ubiquinone oxidoreductase chain 2 (ND2) from Apis mellifera ligustica (Common honeybee).